Reading from the N-terminus, the 230-residue chain is Thiamine-triphosphatase (230 aa).

A2 is subject to N-acetylalanine. Residues 5 to 201 (LIEVERKFLP…AKLIVYLQRF (197 aa)) form the CYTH domain. Residues E7 and E9 each coordinate Mg(2+). K11, R55, R57, K65, and R125 together coordinate substrate. 3 residues coordinate Mg(2+): D145, E157, and E159. Residue E157 coordinates substrate. K193 provides a ligand contact to substrate.

The protein belongs to the ThTPase family. Monomer. It depends on Mg(2+) as a cofactor. Widely expressed but at a low level.

It is found in the cytoplasm. The enzyme catalyses thiamine triphosphate + H2O = thiamine diphosphate + phosphate + H(+). Its function is as follows. Hydrolase highly specific for thiamine triphosphate (ThTP). The sequence is that of Thiamine-triphosphatase (THTPA) from Homo sapiens (Human).